The chain runs to 138 residues: 10 kDa chaperonin 1, chloroplastic (138 aa).

The N-terminal 61 residues, M1–R61, are a transit peptide targeting the chloroplast. The interval K50–V137 is cpn-10 domain.

This sequence belongs to the GroES chaperonin family. Expressed at low levels in germinating seeds, seedlings, rosettes leaves, flowers and siliques.

The protein localises to the plastid. It is found in the chloroplast. Functions as a co-chaperone for protein folding in chloroplasts. This Arabidopsis thaliana (Mouse-ear cress) protein is 10 kDa chaperonin 1, chloroplastic.